A 319-amino-acid polypeptide reads, in one-letter code: Acetyl-coenzyme A carboxylase carboxyl transferase subunit beta, chloroplastic (319 aa).

Positions 47 to 319 constitute a CoA carboxyltransferase N-terminal domain; the sequence is LWVQCDNCES…ELFYVLQSSS (273 aa). Residues Cys-51, Cys-54, Cys-70, and Cys-73 each coordinate Zn(2+). A C4-type zinc finger spans residues 51-73; sequence CDNCESLLYIRFLRENKSVCEEC.

Belongs to the AccD/PCCB family. Acetyl-CoA carboxylase is a heterohexamer composed of biotin carboxyl carrier protein, biotin carboxylase and 2 subunits each of ACCase subunit alpha and ACCase plastid-coded subunit beta (accD). It depends on Zn(2+) as a cofactor.

Its subcellular location is the plastid. It localises to the chloroplast stroma. It carries out the reaction N(6)-carboxybiotinyl-L-lysyl-[protein] + acetyl-CoA = N(6)-biotinyl-L-lysyl-[protein] + malonyl-CoA. It functions in the pathway lipid metabolism; malonyl-CoA biosynthesis; malonyl-CoA from acetyl-CoA: step 1/1. Functionally, component of the acetyl coenzyme A carboxylase (ACC) complex. Biotin carboxylase (BC) catalyzes the carboxylation of biotin on its carrier protein (BCCP) and then the CO(2) group is transferred by the transcarboxylase to acetyl-CoA to form malonyl-CoA. The polypeptide is Acetyl-coenzyme A carboxylase carboxyl transferase subunit beta, chloroplastic (Picea abies (Norway spruce)).